We begin with the raw amino-acid sequence, 92 residues long: Small ribosomal subunit protein uS19 (92 aa).

The protein belongs to the universal ribosomal protein uS19 family.

In terms of biological role, protein S19 forms a complex with S13 that binds strongly to the 16S ribosomal RNA. This Brucella ovis (strain ATCC 25840 / 63/290 / NCTC 10512) protein is Small ribosomal subunit protein uS19.